Reading from the N-terminus, the 316-residue chain is Phosphatidylglycerol--prolipoprotein diacylglyceryl transferase (316 aa).

The next 3 membrane-spanning stretches (helical) occupy residues 18-38 (PIPIRAYAMCIIAGIIVAIWL), 47-67 (GGNPEIVLDAAIVAVPAGIIG), and 95-115 (NGGLGIWGAVILGGLAVAVFF). Arg-141 contacts a 1,2-diacyl-sn-glycero-3-phospho-(1'-sn-glycerol). Helical transmembrane passes span 188 to 208 (VHPTFLYELLWNLLIFALLMW) and 251 to 271 (INTIVSAVVFAGAIIVFFLLK). A disordered region spans residues 292-316 (AVASPDGKPLPKAGEGIDGETPSTR).

Belongs to the Lgt family.

The protein resides in the cell membrane. The catalysed reaction is L-cysteinyl-[prolipoprotein] + a 1,2-diacyl-sn-glycero-3-phospho-(1'-sn-glycerol) = an S-1,2-diacyl-sn-glyceryl-L-cysteinyl-[prolipoprotein] + sn-glycerol 1-phosphate + H(+). The protein operates within protein modification; lipoprotein biosynthesis (diacylglyceryl transfer). Catalyzes the transfer of the diacylglyceryl group from phosphatidylglycerol to the sulfhydryl group of the N-terminal cysteine of a prolipoprotein, the first step in the formation of mature lipoproteins. The polypeptide is Phosphatidylglycerol--prolipoprotein diacylglyceryl transferase (Corynebacterium glutamicum (strain ATCC 13032 / DSM 20300 / JCM 1318 / BCRC 11384 / CCUG 27702 / LMG 3730 / NBRC 12168 / NCIMB 10025 / NRRL B-2784 / 534)).